The sequence spans 194 residues: Ion-translocating oxidoreductase complex subunit B (194 aa).

A hydrophobic region spans residues 1–26 (MSSILIAVIAISALALVFGLILGFAS). The 4Fe-4S domain occupies 32 to 90 (ESDPIVDQIDSILPQTQCGQCGYPGCKPYAEAIANGDTINKCPPGGQATIEKLADLMGV). [4Fe-4S] cluster-binding residues include Cys49, Cys52, Cys57, Cys73, Cys114, Cys117, Cys120, Cys124, Cys144, Cys147, Cys150, and Cys154. 4Fe-4S ferredoxin-type domains are found at residues 105 to 134 (KIAF…GGTK) and 135 to 164 (ALHT…MIPV).

Belongs to the 4Fe4S bacterial-type ferredoxin family. RnfB subfamily. As to quaternary structure, the complex is composed of six subunits: RnfA, RnfB, RnfC, RnfD, RnfE and RnfG. It depends on [4Fe-4S] cluster as a cofactor.

Its subcellular location is the cell inner membrane. Functionally, part of a membrane-bound complex that couples electron transfer with translocation of ions across the membrane. The protein is Ion-translocating oxidoreductase complex subunit B of Aliivibrio salmonicida (strain LFI1238) (Vibrio salmonicida (strain LFI1238)).